The following is a 203-amino-acid chain: ATP-dependent Clp protease proteolytic subunit 2 (203 aa).

Residue serine 97 is the Nucleophile of the active site. Residue histidine 122 is part of the active site.

This sequence belongs to the peptidase S14 family. In terms of assembly, fourteen ClpP subunits assemble into 2 heptameric rings which stack back to back to give a disk-like structure with a central cavity, resembling the structure of eukaryotic proteasomes.

The protein resides in the cytoplasm. The enzyme catalyses Hydrolysis of proteins to small peptides in the presence of ATP and magnesium. alpha-casein is the usual test substrate. In the absence of ATP, only oligopeptides shorter than five residues are hydrolyzed (such as succinyl-Leu-Tyr-|-NHMec, and Leu-Tyr-Leu-|-Tyr-Trp, in which cleavage of the -Tyr-|-Leu- and -Tyr-|-Trp bonds also occurs).. Its function is as follows. Cleaves peptides in various proteins in a process that requires ATP hydrolysis. Has a chymotrypsin-like activity. Plays a major role in the degradation of misfolded proteins. In Myxococcus xanthus (strain DK1622), this protein is ATP-dependent Clp protease proteolytic subunit 2.